Reading from the N-terminus, the 728-residue chain is Catalase-peroxidase (728 aa).

The tryptophyl-tyrosyl-methioninium (Trp-Tyr) (with M-244) cross-link spans 91 to 218 (WHSAGTYRTA…LAAVQMGLIY (128 aa)). Catalysis depends on His-92, which acts as the Proton acceptor. The tryptophyl-tyrosyl-methioninium (Tyr-Met) (with W-91) cross-link spans 218–244 (YVNPEGPDGTPDPVAAAHDIRETFARM). Residue His-259 participates in heme b binding.

Belongs to the peroxidase family. Peroxidase/catalase subfamily. Homodimer or homotetramer. It depends on heme b as a cofactor. Formation of the three residue Trp-Tyr-Met cross-link is important for the catalase, but not the peroxidase activity of the enzyme.

The enzyme catalyses H2O2 + AH2 = A + 2 H2O. The catalysed reaction is 2 H2O2 = O2 + 2 H2O. In terms of biological role, bifunctional enzyme with both catalase and broad-spectrum peroxidase activity. This Burkholderia lata (strain ATCC 17760 / DSM 23089 / LMG 22485 / NCIMB 9086 / R18194 / 383) protein is Catalase-peroxidase.